The primary structure comprises 543 residues: Chaperonin GroEL (543 aa).

ATP-binding positions include 29–32, 86–90, G413, 477–479, and D493; these read TLGP, DGTTT, and DAL.

The protein belongs to the chaperonin (HSP60) family. Forms a cylinder of 14 subunits composed of two heptameric rings stacked back-to-back. Interacts with the co-chaperonin GroES.

It is found in the cytoplasm. The enzyme catalyses ATP + H2O + a folded polypeptide = ADP + phosphate + an unfolded polypeptide.. Together with its co-chaperonin GroES, plays an essential role in assisting protein folding. The GroEL-GroES system forms a nano-cage that allows encapsulation of the non-native substrate proteins and provides a physical environment optimized to promote and accelerate protein folding. The sequence is that of Chaperonin GroEL from Clostridium novyi (strain NT).